The chain runs to 575 residues: MPTTDSARAADIKQPDIKPRSRDVTDGLEKAAARGMLRAVGMGDEDFAKPQIGVASSWNEITPCNLSLDRLAKAVKEGVFAAGGYPLEFGTISVSDGISMGHEGMHFSLVSREVIADSVETVMQAERLDGSVLLAGCDKSLPGMLMAAARLDLASVFLYAGSILPGVAKLSDGSEREVTIIDAFEAVGACARGLMPREDVDAIERAICPGEGACGGMYTANTMASAAEALGMSLPGSAAPPATDRRRDGFARRSGQAVVELLRRGITARDILTKEAFENAIAVVMAFGGSTNAVLHLLAIAHEADVALSLDDFSRIGSKVPHLADVKPFGRHVMTDVDHIGGVPVMMKALLDAGLLNGDCLTVTGATVAQNLAAIAPPDPDGKVLRALSDPLHPTGGITILRGSLAPEGAVVKSAGFDSDVFEGTARVFDGERAALDALEDGTITKGDAVVIRYEGPKGGPGMREMLAITGAIKGAGLGKDVLLLTDGRFSGGTTGLCVGHIAPEAVDAGPIAFLRDGDRIRLDVANRVLDVLVDPAEFDSRRTGFTPPPPRYKTGVLAKYVKLVGSAAIGAVCG.

The interval 1-25 (MPTTDSARAADIKQPDIKPRSRDVT) is disordered. Residues 8–25 (RAADIKQPDIKPRSRDVT) are compositionally biased toward basic and acidic residues. [2Fe-2S] cluster is bound at residue Cys64. Mg(2+) is bound at residue Asp96. Position 137 (Cys137) interacts with [2Fe-2S] cluster. Residues Asp138 and Lys139 each coordinate Mg(2+). An N6-carboxylysine modification is found at Lys139. Cys214 contributes to the [2Fe-2S] cluster binding site. Glu465 contacts Mg(2+). Ser491 (proton acceptor) is an active-site residue.

It belongs to the IlvD/Edd family. As to quaternary structure, homodimer. The cofactor is [2Fe-2S] cluster. Mg(2+) is required as a cofactor.

The enzyme catalyses (2R)-2,3-dihydroxy-3-methylbutanoate = 3-methyl-2-oxobutanoate + H2O. The catalysed reaction is (2R,3R)-2,3-dihydroxy-3-methylpentanoate = (S)-3-methyl-2-oxopentanoate + H2O. It participates in amino-acid biosynthesis; L-isoleucine biosynthesis; L-isoleucine from 2-oxobutanoate: step 3/4. The protein operates within amino-acid biosynthesis; L-valine biosynthesis; L-valine from pyruvate: step 3/4. In terms of biological role, functions in the biosynthesis of branched-chain amino acids. Catalyzes the dehydration of (2R,3R)-2,3-dihydroxy-3-methylpentanoate (2,3-dihydroxy-3-methylvalerate) into 2-oxo-3-methylpentanoate (2-oxo-3-methylvalerate) and of (2R)-2,3-dihydroxy-3-methylbutanoate (2,3-dihydroxyisovalerate) into 2-oxo-3-methylbutanoate (2-oxoisovalerate), the penultimate precursor to L-isoleucine and L-valine, respectively. The sequence is that of Dihydroxy-acid dehydratase from Mycolicibacterium paratuberculosis (strain ATCC BAA-968 / K-10) (Mycobacterium paratuberculosis).